The primary structure comprises 488 residues: uncharacterized protein (488 aa).

It belongs to the protein kinase superfamily. ADCK protein kinase family.

This is an uncharacterized protein from Mycobacterium tuberculosis (strain CDC 1551 / Oshkosh).